An 862-amino-acid polypeptide reads, in one-letter code: Squamosa promoter-binding-like protein 1 (862 aa).

The segment at 55–98 is disordered; it reads KRRRVSPEDDDGEECINAATTNGDDGQISGQRGRSSEDEMPRQG. Positions 72–87 are enriched in polar residues; sequence AATTNGDDGQISGQRG. Residues 104–181 form an SBP-type zinc finger; it reads GPCCQVDGCT…AQHNRRRRKV (78 aa). Cys-107, Cys-112, Cys-129, His-132, Cys-148, Cys-151, His-155, and Cys-167 together coordinate Zn(2+). The Bipartite nuclear localization signal signature appears at 164–180; it reads KKSCRSRLAQHNRRRRK.

In terms of tissue distribution, ubiquitous.

The protein resides in the nucleus. In terms of biological role, trans-acting factor that binds specifically to the consensus nucleotide sequence 5'-TNCGTACAA-3'. This is Squamosa promoter-binding-like protein 1 (SPL1) from Oryza sativa subsp. japonica (Rice).